The chain runs to 60 residues: Large ribosomal subunit protein bL32 (60 aa).

A disordered region spans residues 1 to 28 (MAVQQNKKSRSKRDMRRSHDALTGPTLS). Basic residues predominate over residues 7–16 (KKSRSKRDMR).

The protein belongs to the bacterial ribosomal protein bL32 family.

This is Large ribosomal subunit protein bL32 from Cellvibrio japonicus (strain Ueda107) (Pseudomonas fluorescens subsp. cellulosa).